The following is a 511-amino-acid chain: Zinc finger CCCH-type with G patch domain-containing protein (511 aa).

Position 1 is an N-acetylmethionine (M1). S70 bears the Phosphoserine mark. The segment at 92-129 is disordered; that stretch reads PGAPCNDSETAPGSEVQPGSTSSALEEEEEDPDLEELS. A compositionally biased stretch (polar residues) spans 98–115; the sequence is DSETAPGSEVQPGSTSSA. Residues 116 to 127 are compositionally biased toward acidic residues; sequence LEEEEEDPDLEE. The segment at 174–200 adopts a C3H1-type zinc-finger fold; the sequence is KSLKPCPFFLEGKCRFKENCRFSHGQV. A disordered region spans residues 266–291; the sequence is PPLRTEATESSDSDTGDASDSSYARV. The residue at position 276 (S276) is a Phosphoserine. The residue at position 280 (T280) is a Phosphothreonine. The region spanning 313–359 is the G-patch domain; that stretch reads TRGIGSKLLVKMGYEFGKGLGRHAEGRVEPIHAVVLPRGKSLDQCAE. A Phosphoserine modification is found at S353. Disordered regions lie at residues 363 to 393 and 490 to 511; these read KKTK…PPRN and AQEA…MTEF. A compositionally biased stretch (basic and acidic residues) spans 491–511; the sequence is QEADLQRKQRKADTHRKMTEF.

Interacts with CHD4/Mi-2; the interaction is direct.

The protein resides in the nucleus. Functionally, transcription repressor that specifically binds the 5'-GGAG[GA]A[GA]A-3' consensus sequence. Represses transcription by recruiting the chromatin multiprotein complex NuRD to target promoters. Negatively regulates expression of EGFR, a gene involved in cell proliferation, survival and migration. Its ability to repress genes of the EGFR pathway suggest it may act as a tumor suppressor. The sequence is that of Zinc finger CCCH-type with G patch domain-containing protein (Zgpat) from Mus musculus (Mouse).